The chain runs to 414 residues: UDP-N-acetylglucosamine 1-carboxyvinyltransferase (414 aa).

Lys19 to Asn20 is a binding site for phosphoenolpyruvate. Arg89 serves as a coordination point for UDP-N-acetyl-alpha-D-glucosamine. The Proton donor role is filled by Cys113. Cys113 carries the 2-(S-cysteinyl)pyruvic acid O-phosphothioketal modification. Residues Arg118–Leu122, Asp301, and Val323 contribute to the UDP-N-acetyl-alpha-D-glucosamine site.

This sequence belongs to the EPSP synthase family. MurA subfamily.

The protein resides in the cytoplasm. It catalyses the reaction phosphoenolpyruvate + UDP-N-acetyl-alpha-D-glucosamine = UDP-N-acetyl-3-O-(1-carboxyvinyl)-alpha-D-glucosamine + phosphate. Its pathway is cell wall biogenesis; peptidoglycan biosynthesis. Functionally, cell wall formation. Adds enolpyruvyl to UDP-N-acetylglucosamine. The chain is UDP-N-acetylglucosamine 1-carboxyvinyltransferase from Bdellovibrio bacteriovorus (strain ATCC 15356 / DSM 50701 / NCIMB 9529 / HD100).